The sequence spans 103 residues: Enhancer of rudimentary homolog (103 aa).

The protein belongs to the E(R) family. Homodimer.

In terms of biological role, may have a role in the cell cycle. This is Enhancer of rudimentary homolog from Aedes aegypti (Yellowfever mosquito).